We begin with the raw amino-acid sequence, 206 residues long: Potassium channel B446_29190 (206 aa).

Met1 is a topological domain (cytoplasmic). Residues Asn2–Asp25 form a helical membrane-spanning segment. The RxxxFSD motif motif lies at Arg6–Asp12. Residues Ile26–Gln44 are Extracellular-facing. The interval Ala31–Pro34 is short helix H1. Positions Gly36–Gly42 are short helix H2. The chain crosses the membrane as a helical span at residues Trp45–Ser70. Residues Tyr71–Asp76 are Cytoplasmic-facing. The chain crosses the membrane as a helical span at residues Arg77 to Glu102. Topologically, residues Tyr103 to Ser110 are extracellular. A helical transmembrane segment spans residues His111–Leu135. Residues Thr136–Asp147 lie on the Cytoplasmic side of the membrane. Residues Ala148–Val174 traverse the membrane as a helical segment. At Ser175–Ala176 the chain is on the extracellular side. A helical membrane pass occupies residues Pro177–Phe192. The Cytoplasmic segment spans residues Asn193–Ser206.

This sequence belongs to the TMEM175 family. Homotetramer.

The protein localises to the membrane. It carries out the reaction K(+)(in) = K(+)(out). Potassium channel. This Streptomyces collinus (strain DSM 40733 / Tue 365) protein is Potassium channel B446_29190.